The sequence spans 152 residues: FAD synthase (152 aa).

Residues 16-17 (TF), 21-24 (HPGH), Asp-101, and Tyr-129 contribute to the ATP site.

The protein belongs to the archaeal FAD synthase family. Homodimer. A divalent metal cation serves as cofactor.

The catalysed reaction is FMN + ATP + H(+) = FAD + diphosphate. Its pathway is cofactor biosynthesis; FAD biosynthesis; FAD from FMN: step 1/1. Its function is as follows. Catalyzes the transfer of the AMP portion of ATP to flavin mononucleotide (FMN) to produce flavin adenine dinucleotide (FAD) coenzyme. This Methanocaldococcus vulcanius (strain ATCC 700851 / DSM 12094 / M7) (Methanococcus vulcanius) protein is FAD synthase.